The following is a 224-amino-acid chain: MTAKLNSVIINPSVAHTATVIFLHGLGDSGQGWSFMANTWSNFKHIKWIFPNAPSIPVTVNNGMKMPAWYDIYSFADMKREDENGILRSAGQLHELIDAELALGIPSDRILIGGFSQGCMVSLYAGLTYPKRLAGIMGHSGFLPLASKFPSALSRVAKEIPILLTYMTEDPIVPSVLSSASAKYLINNLQLKCLDRPFEGDAHSLSSESFMAMYKFTQTVIGSP.

Active-site charge relay system residues include S116, D170, and H203.

This sequence belongs to the AB hydrolase superfamily. AB hydrolase 2 family.

Its subcellular location is the cytoplasm. The protein resides in the nucleus. It catalyses the reaction S-hexadecanoyl-L-cysteinyl-[protein] + H2O = L-cysteinyl-[protein] + hexadecanoate + H(+). Functionally, hydrolyzes fatty acids from S-acylated cysteine residues in proteins with a strong preference for palmitoylated G-alpha proteins over other acyl substrates. Mediates the deacylation of G-alpha proteins such as GPA1 in vivo, but has weak or no activity toward palmitoylated Ras proteins. Has weak lysophospholipase activity in vitro; however such activity may not exist in vivo. This is Acyl-protein thioesterase 1 from Schizosaccharomyces pombe (strain 972 / ATCC 24843) (Fission yeast).